A 113-amino-acid chain; its full sequence is U11-theraphotoxin-Hhn1a (113 aa).

Residues 1 to 21 (MNTVRVTFLLVFVLAVSLGQA) form the signal peptide. The propeptide occupies 22–74 (DKDENRMEMQEKTEQGKSYLDFAENLLLQKLEELVAKLLEEDSEESRNSRQKR). Disulfide bonds link cysteine 75-cysteine 90, cysteine 82-cysteine 95, and cysteine 89-cysteine 110.

The protein belongs to the neurotoxin 14 (magi-1) family. 01 (HNTX-16) subfamily. In terms of tissue distribution, expressed by the venom gland.

It localises to the secreted. Functionally, probable ion channel inhibitor. This Cyriopagopus hainanus (Chinese bird spider) protein is U11-theraphotoxin-Hhn1a.